The primary structure comprises 186 residues: Lipoprotein signal peptidase (186 aa).

4 consecutive transmembrane segments (helical) span residues 8–28 (FFSVFKPGYLAFVAFGLFLDL), 44–64 (IPVLGDFFRLSLTFNTGFVFG), 66–86 (FQDNALPSLFATGFAIVFLIF), and 97–117 (AWGWNFVMAGAFGNFLDKFFV). Residues aspartate 142 and aspartate 164 contribute to the active site. Residues 157–177 (WPAFNVADSCVSIGIVILLFT) form a helical membrane-spanning segment.

This sequence belongs to the peptidase A8 family.

It is found in the cell inner membrane. It carries out the reaction Release of signal peptides from bacterial membrane prolipoproteins. Hydrolyzes -Xaa-Yaa-Zaa-|-(S,diacylglyceryl)Cys-, in which Xaa is hydrophobic (preferably Leu), and Yaa (Ala or Ser) and Zaa (Gly or Ala) have small, neutral side chains.. Its pathway is protein modification; lipoprotein biosynthesis (signal peptide cleavage). In terms of biological role, this protein specifically catalyzes the removal of signal peptides from prolipoproteins. The polypeptide is Lipoprotein signal peptidase (Leptospira biflexa serovar Patoc (strain Patoc 1 / ATCC 23582 / Paris)).